The following is a 327-amino-acid chain: Glycerol-3-phosphate dehydrogenase [NAD(P)+] (327 aa).

Residues W16, R36, and K108 each coordinate NADPH. The sn-glycerol 3-phosphate site is built by K108, G136, and S138. A140 provides a ligand contact to NADPH. 5 residues coordinate sn-glycerol 3-phosphate: K191, D244, S254, R255, and N256. Catalysis depends on K191, which acts as the Proton acceptor. R255 is a binding site for NADPH. Residues L274 and E276 each contribute to the NADPH site.

The protein belongs to the NAD-dependent glycerol-3-phosphate dehydrogenase family.

It is found in the cytoplasm. The enzyme catalyses sn-glycerol 3-phosphate + NAD(+) = dihydroxyacetone phosphate + NADH + H(+). The catalysed reaction is sn-glycerol 3-phosphate + NADP(+) = dihydroxyacetone phosphate + NADPH + H(+). The protein operates within membrane lipid metabolism; glycerophospholipid metabolism. In terms of biological role, catalyzes the reduction of the glycolytic intermediate dihydroxyacetone phosphate (DHAP) to sn-glycerol 3-phosphate (G3P), the key precursor for phospholipid synthesis. This chain is Glycerol-3-phosphate dehydrogenase [NAD(P)+], found in Bradyrhizobium sp. (strain ORS 278).